The chain runs to 415 residues: Multidrug resistance protein MdtA (415 aa).

A signal peptide spans 1–21; that stretch reads MKGSYKSRWVIVIVVVIAAIA. Disordered stretches follow at residues 32 to 60 and 392 to 415; these read SRSAAPGATKQAQQSPASGRRGMRSGPLA and EAQSATTPEEKATSREYAKKGARS. The segment covering 399–415 has biased composition (basic and acidic residues); that stretch reads PEEKATSREYAKKGARS.

It belongs to the membrane fusion protein (MFP) (TC 8.A.1) family. As to quaternary structure, part of a tripartite efflux system composed of MdtA, MdtB and MdtC.

It localises to the cell inner membrane. In terms of biological role, the MdtABC tripartite complex confers resistance against novobiocin and deoxycholate. This Escherichia coli O81 (strain ED1a) protein is Multidrug resistance protein MdtA.